A 132-amino-acid chain; its full sequence is Small ribosomal subunit protein uS11 (132 aa).

Basic residues predominate over residues 1–16; it reads MAAGMKGKRSRRRKER. The tract at residues 1-20 is disordered; it reads MAAGMKGKRSRRRKERKNVE.

The protein belongs to the universal ribosomal protein uS11 family. In terms of assembly, part of the 30S ribosomal subunit. Interacts with proteins S7 and S18. Binds to IF-3.

In terms of biological role, located on the platform of the 30S subunit, it bridges several disparate RNA helices of the 16S rRNA. Forms part of the Shine-Dalgarno cleft in the 70S ribosome. The chain is Small ribosomal subunit protein uS11 from Clostridium botulinum (strain Kyoto / Type A2).